Consider the following 469-residue polypeptide: A-type ATP synthase subunit B (469 aa).

The protein belongs to the ATPase alpha/beta chains family. Has multiple subunits with at least A(3), B(3), C, D, E, F, H, I and proteolipid K(x).

It localises to the cell membrane. Functionally, component of the A-type ATP synthase that produces ATP from ADP in the presence of a proton gradient across the membrane. The B chain is a regulatory subunit. In Staphylothermus marinus (strain ATCC 43588 / DSM 3639 / JCM 9404 / F1), this protein is A-type ATP synthase subunit B.